The primary structure comprises 375 residues: DNA replication and repair protein RecF (375 aa).

Residue 30–37 (GENAQGKT) participates in ATP binding.

Belongs to the RecF family.

It localises to the cytoplasm. In terms of biological role, the RecF protein is involved in DNA metabolism; it is required for DNA replication and normal SOS inducibility. RecF binds preferentially to single-stranded, linear DNA. It also seems to bind ATP. The protein is DNA replication and repair protein RecF of Bacillus anthracis (strain A0248).